A 149-amino-acid polypeptide reads, in one-letter code: UPF0208 membrane protein PBPRA2797 (149 aa).

A run of 2 helical transmembrane segments spans residues 41 to 60 (FATRVMPAVAVMSVLSQMAF) and 65 to 87 (ALPQAMTVALFALTMPLQGLWWL).

The protein belongs to the UPF0208 family.

It is found in the cell inner membrane. This chain is UPF0208 membrane protein PBPRA2797, found in Photobacterium profundum (strain SS9).